Reading from the N-terminus, the 289-residue chain is ATP synthase gamma chain (289 aa).

Belongs to the ATPase gamma chain family. In terms of assembly, F-type ATPases have 2 components, CF(1) - the catalytic core - and CF(0) - the membrane proton channel. CF(1) has five subunits: alpha(3), beta(3), gamma(1), delta(1), epsilon(1). CF(0) has three main subunits: a, b and c.

The protein resides in the cell inner membrane. Functionally, produces ATP from ADP in the presence of a proton gradient across the membrane. The gamma chain is believed to be important in regulating ATPase activity and the flow of protons through the CF(0) complex. The chain is ATP synthase gamma chain from Mannheimia succiniciproducens (strain KCTC 0769BP / MBEL55E).